The following is a 655-amino-acid chain: Protein-glucosylgalactosylhydroxylysine glucosidase (655 aa).

258–259 serves as a coordination point for substrate; sequence WD. Glu388 functions as the Proton donor in the catalytic mechanism. 456–457 is a binding site for substrate; it reads KQ.

This sequence belongs to the glycosyl hydrolase 65 family.

The catalysed reaction is (5R)-5-O-[alpha-D-glucosyl-(1-&gt;2)-beta-D-galactosyl]-5-hydroxy-L-lysyl-[collagen] + H2O = (5R)-5-O-(beta-D-galactosyl)-5-hydroxy-L-lysyl-[collagen] + D-glucose. In terms of biological role, catalyzes the hydrolysis of glucose from the disaccharide unit linked to hydroxylysine residues of collagen and collagen-like proteins. The sequence is that of Protein-glucosylgalactosylhydroxylysine glucosidase from Danio rerio (Zebrafish).